The primary structure comprises 102 residues: MTEDKQQSDSATIDDIETREPPMYRVLIHNDDYTSMDFVVAILMQIFSKTEAVAEEIMLTVHSSEVGVAGLYTHEIAETKVAIVHQLAEQNEFPLRCSLEKE.

This sequence belongs to the ClpS family. As to quaternary structure, binds to the N-terminal domain of the chaperone ClpA.

Functionally, involved in the modulation of the specificity of the ClpAP-mediated ATP-dependent protein degradation. This Desulfotalea psychrophila (strain LSv54 / DSM 12343) protein is ATP-dependent Clp protease adapter protein ClpS.